The primary structure comprises 357 residues: Serine proteinase inhibitor 1 (357 aa).

This sequence belongs to the serpin family. Poxviruses subfamily.

It localises to the host cytoplasm. Functionally, plays a role in mediating viral host range. May act to inhibit a caspase independent form of apoptosis to allow efficient virus replication in infected cells. The protein is Serine proteinase inhibitor 1 (OPG208) of Monkeypox virus.